The sequence spans 225 residues: Glutathione S-transferase Mu 5 (225 aa).

The GST N-terminal domain occupies 5–92 (KSMVLGYWDI…YIARKHNMCG (88 aa)). Phosphoserine is present on Ser6. Residues 11–12 (YW), 50–54 (WLDVK), 63–64 (NL), and 76–77 (QS) each bind glutathione. Positions 94-212 (TEEEKIRVDI…QSDRCFKMPI (119 aa)) constitute a GST C-terminal domain. Tyr120 is a binding site for substrate.

The protein belongs to the GST superfamily. Mu family. In terms of assembly, homodimer. The N-terminus is blocked. Expressed in testis and brain. Very low expression in liver, kidney, heart and lung.

The protein localises to the cytoplasm. It catalyses the reaction RX + glutathione = an S-substituted glutathione + a halide anion + H(+). Functionally, conjugation of reduced glutathione to a wide number of exogenous and endogenous hydrophobic electrophiles. This is Glutathione S-transferase Mu 5 (Gstm5) from Rattus norvegicus (Rat).